The following is an 800-amino-acid chain: Phenylalanine--tRNA ligase beta subunit (800 aa).

The tRNA-binding domain maps to 39 to 154; that stretch reads TKDIKNLVVG…ESQVPGTDAL (116 aa). The B5 domain maps to 408-483; that stretch reads AFITPIDITA…RIYGYDDIPS (76 aa). Mg(2+) is bound by residues Asp-461, Asp-467, Glu-470, and Glu-471. Residues 708–800 enclose the FDX-ACB domain; the sequence is PIFPGMSRDI…ALIEQGAVIR (93 aa).

This sequence belongs to the phenylalanyl-tRNA synthetase beta subunit family. Type 1 subfamily. Tetramer of two alpha and two beta subunits. Mg(2+) is required as a cofactor.

The protein resides in the cytoplasm. It carries out the reaction tRNA(Phe) + L-phenylalanine + ATP = L-phenylalanyl-tRNA(Phe) + AMP + diphosphate + H(+). In Staphylococcus aureus (strain bovine RF122 / ET3-1), this protein is Phenylalanine--tRNA ligase beta subunit.